Consider the following 343-residue polypeptide: Sodium/bile acid cotransporter 7 (343 aa).

Residues 1-10 (MGLLERLRKE) are Cytoplasmic-facing. Residues 11–31 (WFIVGIILVIAAAKLEPTIGG) traverse the membrane as a helical segment. The Extracellular segment spans residues 32–37 (KGGPLK). Residues 38-58 (PEITITYIAVSAIFFNSGLSL) form a helical membrane-spanning segment. Residues 59-71 (KTEELTNALMHVK) lie on the Cytoplasmic side of the membrane. The chain crosses the membrane as a helical span at residues 72–92 (LHLFVQLFTLVFFPTAIWVFL). The Extracellular segment spans residues 93 to 116 (QVLSLTPINEWLLKGLQTVSCMPP). Residues 117–137 (PVSSAVILTKAVGGNEAAAIF) form a helical membrane-spanning segment. Position 138 (N138) is a topological domain, cytoplasmic. A helical membrane pass occupies residues 139–159 (SAFGSFLGIVVTPLLLLLFLG). Over 160-163 (SSSS) the chain is Extracellular. The chain crosses the membrane as a helical span at residues 164–184 (VPFTSIFSQLFMTVVVPLIIG). Over 185–201 (QIVRRYIKDWLERKKPP) the chain is Cytoplasmic. A helical transmembrane segment spans residues 202-222 (FGAISSCVLLMIIYTTFCDTF). The Extracellular portion of the chain corresponds to 223–234 (SNPNIDLDTFSL). Residues 235–255 (VIIVFIIFFIQLAFMLLTFLF) form a helical membrane-spanning segment. The Cytoplasmic portion of the chain corresponds to 256-270 (STSKNTGFTPADTVA). Residues 271 to 291 (IVFCSTHKSLTLGIPMLKIVF) form a helical membrane-spanning segment. Over 292-298 (AGYEHLS) the chain is Extracellular. Residues 299–319 (LISVPLLIYHPAQILLGSVLV) form a helical membrane-spanning segment. The Cytoplasmic segment spans residues 320-343 (PTIKSWMLSRQKALKLTRQPKVPL).

The protein belongs to the bile acid:sodium symporter (BASS) (TC 2.A.28) family.

Its subcellular location is the cell membrane. It is found in the endoplasmic reticulum membrane. The protein resides in the golgi apparatus membrane. Its function is as follows. Involved in teeth and skeletal development. Has an essential role in the biosynthesis and trafficking of glycosaminoglycans and glycoproteins to produce a proper functioning extracellular matrix. Required for extracellular matrix mineralization. Also involved in the regulation of cellular calcium homeostasis. Does not show transport activity towards bile acids or steroid sulfates. This Xenopus tropicalis (Western clawed frog) protein is Sodium/bile acid cotransporter 7 (slc10a7).